A 440-amino-acid chain; its full sequence is MERDIYLIGLNHRTAGVEVRERFALTDCNVLEQGVVPIDDVVSEVLILSTCNRVEILAVGRGPEVVSRVLRGWAAARGQCEHDLAPYVYTHKGHEAVRHLFRVASSLDSMVVGEPQILGQLKDAYRKAIERNCTRVILNRLLHKAFSVAKRVRTETGVASSAVSISYAAVELAKRIFGEMNQYKAMLIGAGEMAELAATHLLHAGISKIYVANRTFERGRELARQFNGEAIHFEDLFERLADADIIISSTGAHEAIIRARDIKDVLRRRKHRPMFFIDIAVPRDIDPDVNNLDNVYLYDIDDLKEVVEENLAQRREEASKALTIVEEETGKFGQWLRSLELQPTIVDLIRRSERIAQDELARTLKRLGPVDDETRDALEAMLSSMVRKLNHEPITFLKRRHSEEDAGPRYIDIARRMFNLDDDNVPPDAHCDRRRHDEDN.

Substrate contacts are provided by residues Thr50–Arg53, Ser109, Glu114–Gln116, and Gln120. The active-site Nucleophile is the Cys51. An NADP(+)-binding site is contributed by Gly189–Ala194.

It belongs to the glutamyl-tRNA reductase family. Homodimer.

It catalyses the reaction (S)-4-amino-5-oxopentanoate + tRNA(Glu) + NADP(+) = L-glutamyl-tRNA(Glu) + NADPH + H(+). Its pathway is porphyrin-containing compound metabolism; protoporphyrin-IX biosynthesis; 5-aminolevulinate from L-glutamyl-tRNA(Glu): step 1/2. Its function is as follows. Catalyzes the NADPH-dependent reduction of glutamyl-tRNA(Glu) to glutamate 1-semialdehyde (GSA). In Nitratidesulfovibrio vulgaris (strain DP4) (Desulfovibrio vulgaris), this protein is Glutamyl-tRNA reductase.